Reading from the N-terminus, the 609-residue chain is Spore coat protein homolog 1 (609 aa).

The N-terminal stretch at 1-17 (MKSLLFVVFIFLTTTYA) is a signal peptide. N-linked (GlcNAc...) asparagine glycans are attached at residues Asn-82, Asn-397, and Asn-440. The tract at residues 527–547 (TVTQVPEAPGTDGTPSESTAW) is disordered. Ser-584 carries GPI-anchor amidated serine lipidation. The propeptide at 585 to 609 (SSSIKRTPCILPLVILASTLFASFF) is removed in mature form.

It is found in the cell membrane. Functionally, may play a role in cell adhesion. This Rhizopus delemar (strain RA 99-880 / ATCC MYA-4621 / FGSC 9543 / NRRL 43880) (Mucormycosis agent) protein is Spore coat protein homolog 1.